The chain runs to 743 residues: Cap-specific mRNA (nucleoside-2'-O-)-methyltransferase 2 (743 aa).

Positions 113–326 constitute an Adrift-type SAM-dependent 2'-O-MTase domain; that stretch reads ELCTQAWAKF…LYIVCLDYQA (214 aa). Residue K121 is part of the active site. S-adenosyl-L-methionine contacts are provided by G152, W171, and D239. The active site involves D239. K279 serves as the catalytic Proton acceptor.

It is found in the nucleus. Its subcellular location is the cytoplasm. It carries out the reaction a 5'-end (N(7)-methyl 5'-triphosphoguanosine)-(2'-O-methyl-ribonucleoside)-(ribonucleotide) in mRNA + S-adenosyl-L-methionine = a 5'-end (N(7)-methyl 5'-triphosphoguanosine)-(2'-O-methyl-ribonucleoside)-(2'-O-methyl-ribonucleotide) in mRNA + S-adenosyl-L-homocysteine + H(+). Its function is as follows. S-adenosyl-L-methionine-dependent methyltransferase that mediates mRNA cap2 2'-O-ribose methylation to the 5'-cap structure of mRNAs. Methylates the ribose of the second nucleotide of a m(7)GpppG-capped mRNA and small nuclear RNA (snRNA) (cap0) to produce m(7)GpppRmpNm (cap2). The chain is Cap-specific mRNA (nucleoside-2'-O-)-methyltransferase 2 (cmtr2) from Danio rerio (Zebrafish).